The following is a 31-amino-acid chain: Cyclotide cter-D (31 aa).

Residues 1-31 constitute a cross-link (cyclopeptide (Gly-Asn)); the sequence is GIPCAESCVWIPCTVTALLGCSCKDKVCYLN. 3 disulfide bridges follow: Cys4–Cys21, Cys8–Cys23, and Cys13–Cys28.

In terms of processing, contains 3 disulfide bonds. Post-translationally, this is a cyclic peptide. As to expression, expressed in root, seed and nodule but not in flower, stem, shoot, leaf and pod.

Functionally, probably participates in a plant defense mechanism. This is Cyclotide cter-D from Clitoria ternatea (Butterfly pea).